The primary structure comprises 523 residues: Metalloendopeptidase OMA1, mitochondrial (523 aa).

A mitochondrion-targeting transit peptide spans 1-45 (MSFIYGLQSAARNCFFFRFNLLTNWRKCNTQAVTSRDFHQVKINH). Residues 46–143 (IVNKSLGLGV…RSFHTSPRCQ (98 aa)) constitute a propeptide that is removed on maturation. At 144–195 (AAPAPLLLMILKPAQKLLAIIVGRGIRKWWQALPPNKKELFKESLRKNKWKL) the chain is on the mitochondrial matrix side. Residues 148-167 (PLLLMILKPAQKLLAIIVGR) are cardiolipin-binding. Residues 165-195 (VGRGIRKWWQALPPNKKELFKESLRKNKWKL) form a stress-sensor region region. A helical membrane pass occupies residues 196 to 216 (FLGLSSFGLLFVVFYFTHLEV). Position 327 (H327) interacts with Zn(2+). The active site involves E328. Residues H331 and E392 each coordinate Zn(2+). Residues C407 and C465 are joined by a disulfide bond.

Belongs to the peptidase M48 family. In terms of assembly, homooligomer. Zn(2+) is required as a cofactor. Autocatalytically cleaved in response to mitochondrial depolarization both at the N-terminus and C-terminus to generate the short active form (S-OMA1). Autocatalytic processing at the C-terminus takes place at residues 447-456. The S-OMA1 form is unstable. OMA1 pre-processing by AFG3L2 may participate in maturation before OMA1 autocatalytic cleavage. Degraded by YMEL1 in response to membrane depolarization. Protein turnover is regulated by prohibitin (PHB and PHB2), which promotes degradation of OMA1 in a cardiolipin-binding manner. Post-translationally, may form a redox-dependent disulfide bond. Exists in a semi-oxidized state and is activated by prolonged hypoxia.

The protein resides in the mitochondrion inner membrane. Protease activity is activated upon autocatalytic cleavage in response to mitochondrial depolarization. Functionally, metalloprotease that is part of the quality control system in the inner membrane of mitochondria. Activated in response to various mitochondrial stress, leading to the proteolytic cleavage of target proteins, such as OPA1, UQCC3 and DELE1. Involved in the fusion of the mitochondrial inner membranes by mediating cleavage of OPA1 at S1 position, generating the soluble OPA1 (S-OPA1), which cooperates with the membrane form (L-OPA1) to coordinate the fusion of mitochondrial inner membranes. Following stress conditions that induce loss of mitochondrial membrane potential, mediates cleavage of OPA1, leading to excess production of soluble OPA1 (S-OPA1) and negative regulation of mitochondrial fusion. Involved in mitochondrial safeguard in response to transient mitochondrial membrane depolarization (flickering) by catalyzing cleavage of OPA1, leading to excess production of S-OPA1, preventing mitochondrial hyperfusion. Also acts as a regulator of apoptosis: upon BAK and BAX aggregation, mediates cleavage of OPA1, leading to the remodeling of mitochondrial cristae and allowing the release of cytochrome c from mitochondrial cristae. In depolarized mitochondria, may also act as a backup protease for PINK1 by mediating PINK1 cleavage and promoting its subsequent degradation by the proteasome. May also cleave UQCC3 in response to mitochondrial depolarization. Also acts as an activator of the integrated stress response (ISR): in response to mitochondrial stress, mediates cleavage of DELE1 to generate the processed form of DELE1 (S-DELE1), which translocates to the cytosol and activates EIF2AK1/HRI to trigger the ISR. Its role in mitochondrial quality control is essential for regulating lipid metabolism as well as to maintain body temperature and energy expenditure under cold-stress conditions. Binds cardiolipin, possibly regulating its protein turnover. Required for the stability of the respiratory supercomplexes. The polypeptide is Metalloendopeptidase OMA1, mitochondrial (Bos taurus (Bovine)).